Consider the following 468-residue polypeptide: ATP synthase subunit beta (468 aa).

Residue 155–162 participates in ATP binding; sequence GGAGVGKT.

Belongs to the ATPase alpha/beta chains family. In terms of assembly, F-type ATPases have 2 components, CF(1) - the catalytic core - and CF(0) - the membrane proton channel. CF(1) has five subunits: alpha(3), beta(3), gamma(1), delta(1), epsilon(1). CF(0) has three main subunits: a(1), b(2) and c(9-12). The alpha and beta chains form an alternating ring which encloses part of the gamma chain. CF(1) is attached to CF(0) by a central stalk formed by the gamma and epsilon chains, while a peripheral stalk is formed by the delta and b chains.

Its subcellular location is the cell membrane. The enzyme catalyses ATP + H2O + 4 H(+)(in) = ADP + phosphate + 5 H(+)(out). Its function is as follows. Produces ATP from ADP in the presence of a proton gradient across the membrane. The catalytic sites are hosted primarily by the beta subunits. This Streptococcus mutans serotype c (strain ATCC 700610 / UA159) protein is ATP synthase subunit beta.